The sequence spans 383 residues: Acetyl-CoA acetyltransferase (383 aa).

Cys85 acts as the Acyl-thioester intermediate in catalysis. CoA contacts are provided by Cys206, Ser207, Ile209, and Lys328. Catalysis depends on His332, which acts as the Proton acceptor.

The protein belongs to the thiolase-like superfamily. Thiolase family. In terms of assembly, interacts with HMG-CoA synthase (HMGCS) that catalyzes the second step in the pathway and with a DUF35 protein. The acetoacetyl-CoA thiolase/HMG-CoA synthase complex channels the intermediate via a fused CoA-binding site, which allows for efficient coupling of the endergonic thiolase reaction with the exergonic HMGCS reaction.

The enzyme catalyses 2 acetyl-CoA = acetoacetyl-CoA + CoA. It functions in the pathway metabolic intermediate biosynthesis; (R)-mevalonate biosynthesis; (R)-mevalonate from acetyl-CoA: step 1/3. Functionally, catalyzes the condensation of two acetyl-coA molecules into acetoacetyl-CoA. Functions in the mevalonate (MVA) pathway leading to isopentenyl diphosphate (IPP), a key precursor for the biosynthesis of isoprenoid compounds that are building blocks of archaeal membrane lipids. The sequence is that of Acetyl-CoA acetyltransferase from Methanothermobacter thermautotrophicus (strain ATCC 29096 / DSM 1053 / JCM 10044 / NBRC 100330 / Delta H) (Methanobacterium thermoautotrophicum).